We begin with the raw amino-acid sequence, 193 residues long: General stress protein 16U (193 aa).

Belongs to the CAPAB/TerDEXZ family.

The protein is General stress protein 16U (yceD) of Bacillus subtilis (strain 168).